Reading from the N-terminus, the 109-residue chain is Parvalbumin, thymic (109 aa).

At Ala2 the chain carries N-acetylalanine. 2 consecutive EF-hand domains span residues 39–74 (KTPD…FSSS) and 78–109 (LTSA…LVKA). Ca(2+) contacts are provided by Asp52, Asp54, Ser56, Glu63, Asp91, Asp93, Asp95, Lys97, and Glu102.

Belongs to the parvalbumin family.

Its function is as follows. Appears to promote immune maturation in bone marrow cells in culture. Binds two calcium ions. The sequence is that of Parvalbumin, thymic from Gallus gallus (Chicken).